The primary structure comprises 178 residues: Plasmid transfer protein TraF (178 aa).

The signal sequence occupies residues 1–30 (MSRILKRIAAGVVIAGVAALLLAAGGYAAG).

This sequence belongs to the peptidase S26C family.

The protein localises to the periplasm. Functionally, required for donor-specific phage sensitivity. May be involved in pilus assembly. This is Plasmid transfer protein TraF (traF) from Escherichia coli.